A 151-amino-acid chain; its full sequence is Methylglyoxal synthase (151 aa).

Residues Arg-6–Met-151 form the MGS-like domain. Substrate is bound by residues His-19, Lys-23, Thr-45–Thr-48, and Ser-65–Gly-66. Asp-71 serves as the catalytic Proton donor/acceptor. His-98 serves as a coordination point for substrate.

Belongs to the methylglyoxal synthase family.

It carries out the reaction dihydroxyacetone phosphate = methylglyoxal + phosphate. Its function is as follows. Catalyzes the formation of methylglyoxal from dihydroxyacetone phosphate. The chain is Methylglyoxal synthase from Vibrio parahaemolyticus serotype O3:K6 (strain RIMD 2210633).